The primary structure comprises 434 residues: 4-hydroxy-3-methylbut-2-en-1-yl diphosphate synthase (flavodoxin) (434 aa).

A compositionally biased stretch (polar residues) spans 1–15; the sequence is MQSEAQSPRSSQICS. The interval 1–20 is disordered; it reads MQSEAQSPRSSQICSTEPVF. [4Fe-4S] cluster-binding residues include C322, C325, C368, and E375.

Belongs to the IspG family. Requires [4Fe-4S] cluster as cofactor.

It carries out the reaction (2E)-4-hydroxy-3-methylbut-2-enyl diphosphate + oxidized [flavodoxin] + H2O + 2 H(+) = 2-C-methyl-D-erythritol 2,4-cyclic diphosphate + reduced [flavodoxin]. It functions in the pathway isoprenoid biosynthesis; isopentenyl diphosphate biosynthesis via DXP pathway; isopentenyl diphosphate from 1-deoxy-D-xylulose 5-phosphate: step 5/6. Its function is as follows. Converts 2C-methyl-D-erythritol 2,4-cyclodiphosphate (ME-2,4cPP) into 1-hydroxy-2-methyl-2-(E)-butenyl 4-diphosphate. The protein is 4-hydroxy-3-methylbut-2-en-1-yl diphosphate synthase (flavodoxin) of Burkholderia mallei (strain ATCC 23344).